The sequence spans 256 residues: DNA repair protein RecO (256 aa).

Belongs to the RecO family.

Its function is as follows. Involved in DNA repair and RecF pathway recombination. The protein is DNA repair protein RecO of Nocardia farcinica (strain IFM 10152).